Consider the following 130-residue polypeptide: Large ribosomal subunit protein bL12 (130 aa).

This sequence belongs to the bacterial ribosomal protein bL12 family. As to quaternary structure, homodimer. Part of the ribosomal stalk of the 50S ribosomal subunit. Forms a multimeric L10(L12)X complex, where L10 forms an elongated spine to which 2 to 4 L12 dimers bind in a sequential fashion. Binds GTP-bound translation factors.

Its function is as follows. Forms part of the ribosomal stalk which helps the ribosome interact with GTP-bound translation factors. Is thus essential for accurate translation. The chain is Large ribosomal subunit protein bL12 from Chlamydia trachomatis serovar L2 (strain ATCC VR-902B / DSM 19102 / 434/Bu).